The chain runs to 344 residues: Large ribosomal subunit protein uL3 (344 aa).

It belongs to the universal ribosomal protein uL3 family. As to quaternary structure, part of the 50S ribosomal subunit. Forms a cluster with proteins L14 and L24e.

Its function is as follows. One of the primary rRNA binding proteins, it binds directly near the 3'-end of the 23S rRNA, where it nucleates assembly of the 50S subunit. The protein is Large ribosomal subunit protein uL3 of Aeropyrum pernix (strain ATCC 700893 / DSM 11879 / JCM 9820 / NBRC 100138 / K1).